Here is a 337-residue protein sequence, read N- to C-terminus: Phenylalanine--tRNA ligase alpha subunit (337 aa).

Glu252 serves as a coordination point for Mg(2+).

It belongs to the class-II aminoacyl-tRNA synthetase family. Phe-tRNA synthetase alpha subunit type 1 subfamily. Tetramer of two alpha and two beta subunits. Mg(2+) is required as a cofactor.

It is found in the cytoplasm. The catalysed reaction is tRNA(Phe) + L-phenylalanine + ATP = L-phenylalanyl-tRNA(Phe) + AMP + diphosphate + H(+). This is Phenylalanine--tRNA ligase alpha subunit from Francisella tularensis subsp. mediasiatica (strain FSC147).